A 334-amino-acid chain; its full sequence is Methionine import ATP-binding protein MetN (334 aa).

Residues 7–246 form the ABC transporter domain; it reads VEFRSVSKVF…PRSAPARAFV (240 aa). Residue 43 to 50 participates in ATP binding; that stretch reads GYSGAGKS.

This sequence belongs to the ABC transporter superfamily. Methionine importer (TC 3.A.1.24) family. The complex is composed of two ATP-binding proteins (MetN), two transmembrane proteins (MetI) and a solute-binding protein (MetQ).

It localises to the cell membrane. It catalyses the reaction L-methionine(out) + ATP + H2O = L-methionine(in) + ADP + phosphate + H(+). It carries out the reaction D-methionine(out) + ATP + H2O = D-methionine(in) + ADP + phosphate + H(+). Part of the ABC transporter complex MetNIQ involved in methionine import. Responsible for energy coupling to the transport system. The protein is Methionine import ATP-binding protein MetN of Nocardia farcinica (strain IFM 10152).